A 180-amino-acid chain; its full sequence is Transcription factor HES-7.1-A (180 aa).

Residues 13-70 form the bHLH domain; sequence HRKLLKPLVEKRRRERINNSLEKLRIFLFQTLKSEKLKNPKVEKAEILECTVQFLQSR. Residues 84-116 enclose the Orange domain; the sequence is YQSGFQHCLETTLHFMNSKPDMNGVTKELLSHQ. Positions 176 to 179 match the WRPW motif motif; the sequence is WRPW.

In terms of assembly, transcription repression requires formation of a complex with a corepressor protein of the Groucho/TLE family. Expressed in the presumptive midbrain-hindbrain boundary (MHB) as early as the early gastrula stage (stage 10.5). Expression in the MHB continues through to tailbud stage. Also transiently expressed in the eye anlage at late neurula stage.

The protein localises to the nucleus. Functionally, transcriptional repressor. Represses transcription from both N box- and E box-containing promoters. Demarcates the prospective midbrain-hindbrain boundary (MHB) region in the neuroectoderm in early gastrulae embryos by repressing transcription of a number of target genes. This chain is Transcription factor HES-7.1-A (hes7.1-a), found in Xenopus laevis (African clawed frog).